A 354-amino-acid polypeptide reads, in one-letter code: Deoxyribonuclease-2-beta (354 aa).

The first 22 residues, 1-22 (MTAKPLRTVLSLLFFALSGVLG), serve as a signal peptide directing secretion. 9 N-linked (GlcNAc...) asparagine glycosylation sites follow: Asn-70, Asn-77, Asn-95, Asn-98, Asn-114, Asn-129, Asn-208, Asn-271, and Asn-319.

It belongs to the DNase II family. Highly expressed in the eye lens. Detected in liver, but not in the other tissues tested.

The protein resides in the lysosome. It carries out the reaction Endonucleolytic cleavage to nucleoside 3'-phosphates and 3'-phosphooligonucleotide end-products.. Hydrolyzes DNA under acidic conditions. Does not require divalent cations for activity. Participates in the degradation of nuclear DNA during lens cell differentiation. The sequence is that of Deoxyribonuclease-2-beta (Dnase2b) from Mus musculus (Mouse).